The primary structure comprises 734 residues: Photosystem I P700 chlorophyll a apoprotein A2 (734 aa).

Helical transmembrane passes span 46–69 (IFASHFGQLAIIFLWTSGNLFHVA), 135–158 (LYTGAIFLLILSTISLIAGWLHLQ), 175–199 (LNHHLSGLFGVSSLAWTGHLVHVAI), 273–291 (IAHHHLAIAFIFLVAGHMY), 330–353 (IHFQLGLALASLGVITSLVAQHMY), 369–395 (AALYTHHQYIAGFIMTGAFAHGAIFFI), 417–439 (AIISHLSWASLFLGFHTLGLYVH), and 517–535 (FLVHHAIALGLHTTTLILV). Residues cysteine 559 and cysteine 568 each coordinate [4Fe-4S] cluster. 2 helical membrane-spanning segments follow: residues 575 to 596 (AFYLAVFWMLNTIGWVTFYWHW) and 643 to 665 (LSVWAWMFLFGHLVWATGFMFLI). Residues histidine 654, methionine 662, and tyrosine 670 each coordinate chlorophyll a. Tryptophan 671 contributes to the phylloquinone binding site. The chain crosses the membrane as a helical span at residues 707–727 (LVGLAHFSVGYIFTYAAFLIA).

It belongs to the PsaA/PsaB family. The PsaA/B heterodimer binds the P700 chlorophyll special pair and subsequent electron acceptors. PSI consists of a core antenna complex that captures photons, and an electron transfer chain that converts photonic excitation into a charge separation. The eukaryotic PSI reaction center is composed of at least 11 subunits. Requires P700 is a chlorophyll a/chlorophyll a' dimer, A0 is one or more chlorophyll a, A1 is one or both phylloquinones and FX is a shared 4Fe-4S iron-sulfur center. as cofactor.

The protein localises to the plastid. It is found in the chloroplast thylakoid membrane. The catalysed reaction is reduced [plastocyanin] + hnu + oxidized [2Fe-2S]-[ferredoxin] = oxidized [plastocyanin] + reduced [2Fe-2S]-[ferredoxin]. In terms of biological role, psaA and PsaB bind P700, the primary electron donor of photosystem I (PSI), as well as the electron acceptors A0, A1 and FX. PSI is a plastocyanin-ferredoxin oxidoreductase, converting photonic excitation into a charge separation, which transfers an electron from the donor P700 chlorophyll pair to the spectroscopically characterized acceptors A0, A1, FX, FA and FB in turn. Oxidized P700 is reduced on the lumenal side of the thylakoid membrane by plastocyanin. This is Photosystem I P700 chlorophyll a apoprotein A2 from Phaseolus vulgaris (Kidney bean).